The primary structure comprises 449 residues: Kynurenine 3-monooxygenase (449 aa).

Belongs to the aromatic-ring hydroxylase family. KMO subfamily. Requires FAD as cofactor.

It carries out the reaction L-kynurenine + NADPH + O2 + H(+) = 3-hydroxy-L-kynurenine + NADP(+) + H2O. Its pathway is cofactor biosynthesis; NAD(+) biosynthesis; quinolinate from L-kynurenine: step 1/3. In terms of biological role, catalyzes the hydroxylation of L-kynurenine (L-Kyn) to form 3-hydroxy-L-kynurenine (L-3OHKyn). Required for synthesis of quinolinic acid. This is Kynurenine 3-monooxygenase from Legionella pneumophila (strain Corby).